Reading from the N-terminus, the 500-residue chain is Cytochrome P450 monooxygenase astJ (500 aa).

A heme-binding site is contributed by Cys440.

It belongs to the cytochrome P450 family. Heme is required as a cofactor.

It participates in secondary metabolite biosynthesis; terpenoid biosynthesis. Functionally, cytochrome P450 monooxygenase; part of the gene cluster that mediates the biosynthesis of astellolides, drimane-type sesquiterpene esters that show antimicrobial, anti-inflammatory, and anti-tumor activities. The first step in astellolide biosynthesis is performed by the sesquiterpene cyclase astC that catalyzes the formation of drimanyl pyrophosphate from farnesyl pyrophosphate. Drimanyl pyrophosphate is then dephosphorylated by the sesquiterpene phosphatase astI to produce drimanyl monophosphate which is further dephosphorylated to drim-8-ene-11-ol by atsK. Drim-8-ene-11-ol is converted to confertifolin, probably by the cytochrome P450 monooxygenase astD and/or the dehydrogenase astE. The cytochrome P450 monooxygenases astB, astF and astJ then hydroxylate confertifolin at C6, C14, or C15 to form trihydroxy confertifolin. The nonribosomal peptide synthetase astA catalyzes ester bond formation between trihydroxy contifolin and benzoic acid (BA) or 4-hydroxy benzoic acid (4HBA), leading to the formation of dideacetyl astellolides A and B, respectively. Finally, the O-acetyltransferase astG converts dideacetyl astellolides A and B into deacetyl astellolides A and B. The polypeptide is Cytochrome P450 monooxygenase astJ (Aspergillus oryzae (strain ATCC 42149 / RIB 40) (Yellow koji mold)).